Reading from the N-terminus, the 230-residue chain is Ubiquitin carboxyl-terminal hydrolase isozyme L3 (230 aa).

In terms of domain architecture, UCH catalytic spans 5 to 229; that stretch reads RWLPLEANPE…LRFNAIALSA (225 aa). The segment at 8 to 13 is interaction with ubiquitin; that stretch reads PLEANP. The active-site Nucleophile is the Cys-95. Phosphoserine is present on Ser-130. An interaction with ubiquitin. Crossover loop which restricts access of large ubiquitin adducts to the active site region spans residues 152 to 159; it reads AHEGQTEA. Residue His-169 is the Proton donor of the active site. Positions 219–224 are interaction with ubiquitin; sequence ELRFNA.

Belongs to the peptidase C12 family. In terms of assembly, preferentially binds diubiquitin; the interaction does not hydrolyze diubiquitin but, in vitro, inhibits the hydrolyzing activity on other substrates.

It is found in the cytoplasm. The catalysed reaction is Thiol-dependent hydrolysis of ester, thioester, amide, peptide and isopeptide bonds formed by the C-terminal Gly of ubiquitin (a 76-residue protein attached to proteins as an intracellular targeting signal).. With respect to regulation, inhibited by monoubiquitin and diubiquitin. In terms of biological role, deubiquitinating enzyme (DUB) that controls levels of cellular ubiquitin through processing of ubiquitin precursors and ubiquitinated proteins. Thiol protease that recognizes and hydrolyzes a peptide bond at the C-terminal glycine of either ubiquitin or NEDD8. Has a 10-fold preference for Arg and Lys at position P3''. Deubiquitinates ENAC in apical compartments, thereby regulating apical membrane recycling. Indirectly increases the phosphorylation of IGFIR, AKT and FOXO1 and promotes insulin-signaling and insulin-induced adipogenesis. Required for stress-response retinal, skeletal muscle and germ cell maintenance. May be involved in working memory. Can hydrolyze UBB(+1), a mutated form of ubiquitin which is not effectively degraded by the proteasome. This Bos taurus (Bovine) protein is Ubiquitin carboxyl-terminal hydrolase isozyme L3 (UCHL3).